A 516-amino-acid polypeptide reads, in one-letter code: L-amino-acid oxidase (516 aa).

The first 18 residues, 1-18 (MNVFFMFSLLFLAALGSC), serve as a signal peptide directing secretion. A disulfide bridge links Cys28 with Cys189. Residues 61–62 (MS), 81–82 (EA), Arg89, and 103–106 (GPMR) each bind FAD. Residues Arg106 and His239 each coordinate substrate. Val279 serves as a coordination point for FAD. Cys349 and Cys430 are oxidised to a cystine. Asn379 carries N-linked (GlcNAc...) asparagine glycosylation. Tyr390 contacts substrate. FAD-binding positions include Glu475 and 482 to 487 (GWIDST). Residue 482–483 (GW) coordinates substrate.

The protein belongs to the flavin monoamine oxidase family. FIG1 subfamily. As to quaternary structure, homodimer; non-covalently linked. FAD is required as a cofactor. N-glycosylated. As to expression, expressed by the venom gland.

The protein resides in the secreted. It catalyses the reaction an L-alpha-amino acid + O2 + H2O = a 2-oxocarboxylate + H2O2 + NH4(+). Its function is as follows. Catalyzes an oxidative deamination of predominantly hydrophobic and aromatic L-amino acids, thus producing hydrogen peroxide that may contribute to the diverse toxic effects of this enzyme. Exhibits diverse biological activities, such as hemorrhage, hemolysis, edema, apoptosis of vascular endothelial cells or tumor cell lines, antibacterial and antiparasitic activities, as well as regulation of platelet aggregation. Effects of snake L-amino oxidases on platelets are controversial, since they either induce aggregation or inhibit agonist-induced aggregation. These different effects are probably due to different experimental conditions. The polypeptide is L-amino-acid oxidase (Sistrurus catenatus edwardsii (Desert massasauga)).